The chain runs to 477 residues: 3-isopropylmalate dehydratase large subunit (477 aa).

[4Fe-4S] cluster-binding residues include Cys352, Cys413, and Cys416.

This sequence belongs to the aconitase/IPM isomerase family. LeuC type 1 subfamily. Heterodimer of LeuC and LeuD. [4Fe-4S] cluster is required as a cofactor.

The catalysed reaction is (2R,3S)-3-isopropylmalate = (2S)-2-isopropylmalate. The protein operates within amino-acid biosynthesis; L-leucine biosynthesis; L-leucine from 3-methyl-2-oxobutanoate: step 2/4. In terms of biological role, catalyzes the isomerization between 2-isopropylmalate and 3-isopropylmalate, via the formation of 2-isopropylmaleate. This chain is 3-isopropylmalate dehydratase large subunit, found in Pseudomonas putida (strain ATCC 47054 / DSM 6125 / CFBP 8728 / NCIMB 11950 / KT2440).